A 218-amino-acid chain; its full sequence is Probable WRKY transcription factor 12 (218 aa).

A compositionally biased stretch (low complexity) spans 49–63; the sequence is SSLSSPSFPIHNSSS. Disordered stretches follow at residues 49-120 and 199-218; these read SSLS…DMKN and HNHIPSDDSTSPDHDCLSSF. A compositionally biased stretch (polar residues) spans 64–77; the sequence is TTTTHAPLGFSNNL. Residues 105 to 116 are compositionally biased toward low complexity; sequence SNSWWRSNSGSG. The segment at residues 139–204 is a DNA-binding region (WRKY); it reads SDVDVLDDGY…YEGRHNHIPS (66 aa).

It belongs to the WRKY group II-c family.

Its subcellular location is the nucleus. Transcription factor. Interacts specifically with the W box (5'-(T)TGAC[CT]-3'), a frequently occurring elicitor-responsive cis-acting element. The sequence is that of Probable WRKY transcription factor 12 (WRKY12) from Arabidopsis thaliana (Mouse-ear cress).